A 127-amino-acid chain; its full sequence is Mu-like prophage FluMu protein gp41 (127 aa).

The segment at 107 to 127 is disordered; it reads VSRGRLDTADQETGKDLSAVS. Over residues 110 to 121 the composition is skewed to basic and acidic residues; that stretch reads GRLDTADQETGK.

The protein to phage Mu protein gp41.

This is Mu-like prophage FluMu protein gp41 from Haemophilus influenzae (strain ATCC 51907 / DSM 11121 / KW20 / Rd).